A 267-amino-acid chain; its full sequence is MCPAFSIFFNSRRYSLTPPTYTPSPKPPTPKPTPPTYTPSPKPPASKPPTPKPTPPTYTPSPKPPTPKPTPPTYTPSPKPPATKPPTPKPTPPTYTPSPKPPTPKPTPPTYTPSPKPPATKPPTPKPTPPTYTPSPKPPTPKPTPPTYTPSPKPPTPKPTPPTYTPSPKPPTHPTPKPTPPTYTPSPKPPTPKPTPPTYTPSPKPPTPKPTPPTYTPSPKPPATKPPTPKPTPPTYTPTPKPPATKPPTYTPTPPVSHTPSPPPPYY.

Positions 1-267 (MCPAFSIFFN…HTPSPPPPYY (267 aa)) are disordered. Repeats lie at residues 18-33 (PPTY…PKPT), 34-54 (PPTY…PKPT), 55-70 (PPTY…PKPT), 71-91 (PPTY…PKPT), 92-107 (PPTY…PKPT), 108-128 (PPTY…PKPT), 129-144 (PPTY…PKPT), 145-160 (PPTY…PKPT), 161-179 (PPTY…PKPT), 180-195 (PPTY…PKPT), 196-211 (PPTY…PKPT), 212-232 (PPTY…PKPT), and 233-253 (PPTY…YTPT). Residues 18-253 (PPTYTPSPKP…ATKPPTYTPT (236 aa)) form a highly repetitive region. The segment covering 20-267 (TYTPSPKPPT…HTPSPPPPYY (248 aa)) has biased composition (pro residues). Residues 261-265 (SPPPP) are extensin repetitive element.

Hydroxylated on proline residues in the S-P-P-P-P repeat. Post-translationally, O-glycosylated on hydroxyprolines. Mainly in the coleoptile node and root tip.

The protein resides in the secreted. Its subcellular location is the primary cell wall. Its function is as follows. Structural component in primary cell wall. In Zea mays (Maize), this protein is Extensin (HRGP).